We begin with the raw amino-acid sequence, 233 residues long: MAKLTKRMRVIRDKVDGMKSYDINEAVALLKELATAKFVESVDVAVNLGIDPRKSDQNVRGATVLPHGTGRDVRVAVFTQGANAEAAKAAGAELVGMEELAEQIKAGEMNFDVVIASPDAMRVVGMLGQILGPRGLMPNPKTGTVTPNVAEAVKNAKAGQVRYRNDKNGIIHTTIGKVDFTTEQLKENLEALVSALKKAKPAVAKGVFVKKISISTTMGAGVAVDQATLETAN.

Belongs to the universal ribosomal protein uL1 family. In terms of assembly, part of the 50S ribosomal subunit.

Its function is as follows. Binds directly to 23S rRNA. The L1 stalk is quite mobile in the ribosome, and is involved in E site tRNA release. In terms of biological role, protein L1 is also a translational repressor protein, it controls the translation of the L11 operon by binding to its mRNA. In Shewanella denitrificans (strain OS217 / ATCC BAA-1090 / DSM 15013), this protein is Large ribosomal subunit protein uL1.